Reading from the N-terminus, the 379-residue chain is Cytochrome b (379 aa).

The next 4 membrane-spanning stretches (helical) occupy residues 33 to 53 (FGSL…FLAM), 77 to 98 (WTIR…FIHV), 113 to 133 (WNVG…GYVL), and 178 to 198 (FFAL…IHLL). Positions 83 and 97 each coordinate heme b. Heme b contacts are provided by His182 and His196. His201 contacts a ubiquinone. Helical transmembrane passes span 226–246 (TKDF…ALFY), 288–308 (LGGV…PFLQ), 320–340 (LSQF…WIGG), and 347–367 (FINI…FIMP).

The protein belongs to the cytochrome b family. As to quaternary structure, the cytochrome bc1 complex contains 11 subunits: 3 respiratory subunits (MT-CYB, CYC1 and UQCRFS1), 2 core proteins (UQCRC1 and UQCRC2) and 6 low-molecular weight proteins (UQCRH/QCR6, UQCRB/QCR7, UQCRQ/QCR8, UQCR10/QCR9, UQCR11/QCR10 and a cleavage product of UQCRFS1). This cytochrome bc1 complex then forms a dimer. Heme b is required as a cofactor.

It localises to the mitochondrion inner membrane. In terms of biological role, component of the ubiquinol-cytochrome c reductase complex (complex III or cytochrome b-c1 complex) that is part of the mitochondrial respiratory chain. The b-c1 complex mediates electron transfer from ubiquinol to cytochrome c. Contributes to the generation of a proton gradient across the mitochondrial membrane that is then used for ATP synthesis. In Lepilemur dorsalis (Grey-backed sportive lemur), this protein is Cytochrome b (MT-CYB).